The primary structure comprises 68 residues: Conotoxin Cal12.1p3 (68 aa).

Residues 1-21 (DLITNSYTRGKPRHVTSWPKL) constitute a propeptide that is removed on maturation.

Contains 4 disulfide bonds. In terms of tissue distribution, expressed by the venom duct.

Its subcellular location is the secreted. The chain is Conotoxin Cal12.1p3 from Californiconus californicus (California cone).